The primary structure comprises 307 residues: Lipid droplet-associated hydrolase (307 aa).

Catalysis depends on Ser-119, which acts as the Nucleophile. The potential amphipathic helix required for binding to lipid droplets stretch occupies residues Gly-157–Ile-200. A run of 2 helical transmembrane segments spans residues Pro-166–Leu-186 and Leu-188–Ala-208. Residues Asp-254 and His-283 each act as charge relay system in the active site.

It belongs to the AB hydrolase superfamily. LDAH family. As to quaternary structure, interacts with the juvenile hormone hydrolase enzymes Jheh1 and Jheh2. Also interacts with Hmu, Cpr, Gp93 and Pvr. As to expression, expressed in accessory glands.

It localises to the lipid droplet. The protein resides in the endoplasmic reticulum membrane. It catalyses the reaction a cholesterol ester + H2O = cholesterol + a fatty acid + H(+). Its function is as follows. Probable serine lipid hydrolase associated with lipid droplets. Appears to lack or have very low cholesterol esterase activity. Appears to lack triglyceride lipase activity. Involved in cholesterol and triglyceride homeostasis; stimulates cellular triglyceride accumulation and cellular cholesterol release. Involved in negatively regulating juvenile hormone (JH) and possibly, insulin signaling activities such as triacylglycerols (TAG) storage, and thereby plays a role in the endocrine regulation of organismal growth and survival. Likely functions by enhancing the activity of the JH hydrolase enzymes Jheh1 and Jheh2. Required for lipid droplet positioning and fat storage. This Drosophila melanogaster (Fruit fly) protein is Lipid droplet-associated hydrolase.